The following is a 417-amino-acid chain: S-adenosylmethionine synthase (417 aa).

His-16 is an ATP binding site. Mg(2+) is bound at residue Asp-18. Glu-44 provides a ligand contact to K(+). Glu-57 and Gln-100 together coordinate L-methionine. The flexible loop stretch occupies residues 100–110 (QSPDIAQGVDT). ATP is bound by residues 175-177 (DGK), 251-252 (KF), Asp-260, 266-267 (RK), Ala-283, and Lys-287. Residue Asp-260 coordinates L-methionine. Lys-291 is an L-methionine binding site.

The protein belongs to the AdoMet synthase family. As to quaternary structure, homotetramer; dimer of dimers. Mg(2+) serves as cofactor. Requires K(+) as cofactor.

It is found in the cytoplasm. The catalysed reaction is L-methionine + ATP + H2O = S-adenosyl-L-methionine + phosphate + diphosphate. It participates in amino-acid biosynthesis; S-adenosyl-L-methionine biosynthesis; S-adenosyl-L-methionine from L-methionine: step 1/1. Its function is as follows. Catalyzes the formation of S-adenosylmethionine (AdoMet) from methionine and ATP. The overall synthetic reaction is composed of two sequential steps, AdoMet formation and the subsequent tripolyphosphate hydrolysis which occurs prior to release of AdoMet from the enzyme. This is S-adenosylmethionine synthase from Synechococcus elongatus (strain ATCC 33912 / PCC 7942 / FACHB-805) (Anacystis nidulans R2).